A 263-amino-acid polypeptide reads, in one-letter code: MALKHYKNSDSTVFNDAKALFDLNKNILLKGPTGSGKTKLAETLSEVVDTPMHQVNCSVDLDTESLLGFKTIKTNAEGQQEIVFVDGPVIKAMKEGHILYIDEINMAKPETLPVLNGVLDYRRQITNPYTGEVIKAVPGFNVIAAINEGYVGTLPMNEALKNRFVVIHVDYIDGDILKNVIKEQSLLQDDKQIEQIIKFNEDLRTMSKQGQISEEAASIRALLDLCDLITVMPVERAIKRTIIDKLEDEREQQAIYNAVELNF.

31 to 38 contributes to the ATP binding site; that stretch reads GPTGSGKT.

The protein belongs to the CbbQ/NirQ/NorQ/GpvN family.

This is an uncharacterized protein from Staphylococcus aureus (strain NCTC 8325 / PS 47).